The primary structure comprises 274 residues: NH(3)-dependent NAD(+) synthetase (274 aa).

Glycine 46–serine 53 is an ATP binding site. Residue aspartate 52 participates in Mg(2+) binding. Arginine 140 is a binding site for deamido-NAD(+). Threonine 160 provides a ligand contact to ATP. Glutamate 165 provides a ligand contact to Mg(2+). Lysine 173 and aspartate 180 together coordinate deamido-NAD(+). Positions 189 and 211 each coordinate ATP. A deamido-NAD(+)-binding site is contributed by histidine 260–lysine 261.

Belongs to the NAD synthetase family. As to quaternary structure, homodimer.

It catalyses the reaction deamido-NAD(+) + NH4(+) + ATP = AMP + diphosphate + NAD(+) + H(+). It participates in cofactor biosynthesis; NAD(+) biosynthesis; NAD(+) from deamido-NAD(+) (ammonia route): step 1/1. In terms of biological role, catalyzes the ATP-dependent amidation of deamido-NAD to form NAD. Uses ammonia as a nitrogen source. The polypeptide is NH(3)-dependent NAD(+) synthetase (Streptococcus pyogenes serotype M18 (strain MGAS8232)).